A 233-amino-acid polypeptide reads, in one-letter code: Small ribosomal subunit protein uS2c (233 aa).

This sequence belongs to the universal ribosomal protein uS2 family.

Its subcellular location is the plastid. The protein localises to the cyanelle. The polypeptide is Small ribosomal subunit protein uS2c (rps2) (Cyanophora paradoxa).